Here is a 718-residue protein sequence, read N- to C-terminus: Coiled-coil domain-containing protein 157 (718 aa).

The stretch at 300 to 603 forms a coiled coil; the sequence is LRAQLEDAEG…LTKIREVAQQ (304 aa). A compositionally biased stretch (basic and acidic residues) spans 469–482; the sequence is RGSLDEAEAQRSEL. 2 disordered regions span residues 469–490 and 617–690; these read RGSLDEAEAQRSELEEQLQSLQ and PPYK…TQNP. Over residues 639-659 the composition is skewed to low complexity; sequence TGRRQSPGSRTSSTGRTHPGG.

The polypeptide is Coiled-coil domain-containing protein 157 (Ccdc157) (Mus musculus (Mouse)).